The sequence spans 563 residues: GTPase Obg (563 aa).

The Obg domain maps to 2–168; that stretch reads SDFVDRVTVH…RDVILELKSI (167 aa). The 181-residue stretch at 169–349 folds into the OBG-type G domain; sequence ADVALVGFPS…LNFALSALVH (181 aa). GTP-binding positions include 175–182, 200–204, 221–224, 301–304, and 330–332; these read GFPSAGKS, FTTLV, DVPG, NKID, and STA. Ser182 and Thr202 together coordinate Mg(2+). The OCT domain maps to 383 to 469; that stretch reads DEGGSALEFT…ARMVEFDWDP (87 aa). A disordered region spans residues 529-563; it reads RKAGHWADPTVDDDRHDETSLFGHGESSEDGETEE.

Belongs to the TRAFAC class OBG-HflX-like GTPase superfamily. OBG GTPase family. As to quaternary structure, monomer. Mg(2+) serves as cofactor.

The protein localises to the cytoplasm. An essential GTPase which binds GTP, GDP and possibly (p)ppGpp with moderate affinity, with high nucleotide exchange rates and a fairly low GTP hydrolysis rate. Plays a role in control of the cell cycle, stress response, ribosome biogenesis and in those bacteria that undergo differentiation, in morphogenesis control. The sequence is that of GTPase Obg from Bifidobacterium longum (strain DJO10A).